Consider the following 213-residue polypeptide: Protein-L-isoaspartate O-methyltransferase (213 aa).

Residue Ser62 is part of the active site.

The protein belongs to the methyltransferase superfamily. L-isoaspartyl/D-aspartyl protein methyltransferase family.

The protein localises to the cytoplasm. The enzyme catalyses [protein]-L-isoaspartate + S-adenosyl-L-methionine = [protein]-L-isoaspartate alpha-methyl ester + S-adenosyl-L-homocysteine. Its function is as follows. Catalyzes the methyl esterification of L-isoaspartyl residues in peptides and proteins that result from spontaneous decomposition of normal L-aspartyl and L-asparaginyl residues. It plays a role in the repair and/or degradation of damaged proteins. The protein is Protein-L-isoaspartate O-methyltransferase of Desulfovibrio desulfuricans (strain ATCC 27774 / DSM 6949 / MB).